The chain runs to 498 residues: N-succinylglutamate 5-semialdehyde dehydrogenase 1 (498 aa).

Position 231-236 (Gly231–Gly236) interacts with NAD(+). Catalysis depends on residues Glu254 and Cys288.

The protein belongs to the aldehyde dehydrogenase family. AstD subfamily.

It carries out the reaction N-succinyl-L-glutamate 5-semialdehyde + NAD(+) + H2O = N-succinyl-L-glutamate + NADH + 2 H(+). It functions in the pathway amino-acid degradation; L-arginine degradation via AST pathway; L-glutamate and succinate from L-arginine: step 4/5. Functionally, catalyzes the NAD-dependent reduction of succinylglutamate semialdehyde into succinylglutamate. The chain is N-succinylglutamate 5-semialdehyde dehydrogenase 1 from Shewanella denitrificans (strain OS217 / ATCC BAA-1090 / DSM 15013).